Reading from the N-terminus, the 395-residue chain is Renin (395 aa).

The first 21 residues, 1-21 (MLQSWEFVLLISCFLCFSSDA), serve as a signal peptide directing secretion. Positions 22 to 43 (LQRISLKKMPSIRETLQEMGMK) are cleaved as a propeptide — activation peptide. Asn64 carries N-linked (GlcNAc...) asparagine glycosylation. The 314-residue stretch at 79-392 (YYGEISIGTP…DRQNNRIGFA (314 aa)) folds into the Peptidase A1 domain. Asp97 is a catalytic residue. Disulfide bonds link Cys110–Cys117 and Cys274–Cys278. Asp283 is a catalytic residue. Cys316 and Cys351 are joined by a disulfide.

The protein belongs to the peptidase A1 family. In terms of processing, N-glycosylated. As to expression, expressed by the venom gland (at protein level).

It localises to the secreted. It carries out the reaction Cleavage of Leu-|-Xaa bond in angiotensinogen to generate angiotensin I.. Inhibited completely by aspartyl protease inhibitor pepstatin A, but not by the serine- or metalloproteinase inhibitors PMSF or EDTA. In terms of biological role, renin is a highly specific endopeptidase, whose only known function is to generate angiotensin I from angiotensinogen in the plasma, initiating a cascade of reactions that produce an elevation of blood pressure and increased sodium retention by the kidney. This protein is also found in snake venom and shown to specifically cleave human and porcine angiotensinogen into angiotensin I. It does not have general protease activity, no cleavage of alpha or beta casein. May be directly responsible for elevation of blood pressure in the victims of envenomation. This chain is Renin, found in Echis ocellatus (Ocellated saw-scaled viper).